The chain runs to 202 residues: ATP-dependent Clp protease proteolytic subunit (202 aa).

Residue serine 106 is the Nucleophile of the active site. Histidine 131 is a catalytic residue.

The protein belongs to the peptidase S14 family. Fourteen ClpP subunits assemble into 2 heptameric rings which stack back to back to give a disk-like structure with a central cavity, resembling the structure of eukaryotic proteasomes.

It is found in the cytoplasm. It catalyses the reaction Hydrolysis of proteins to small peptides in the presence of ATP and magnesium. alpha-casein is the usual test substrate. In the absence of ATP, only oligopeptides shorter than five residues are hydrolyzed (such as succinyl-Leu-Tyr-|-NHMec, and Leu-Tyr-Leu-|-Tyr-Trp, in which cleavage of the -Tyr-|-Leu- and -Tyr-|-Trp bonds also occurs).. Its function is as follows. Cleaves peptides in various proteins in a process that requires ATP hydrolysis. Has a chymotrypsin-like activity. Plays a major role in the degradation of misfolded proteins. The polypeptide is ATP-dependent Clp protease proteolytic subunit (Acidovorax ebreus (strain TPSY) (Diaphorobacter sp. (strain TPSY))).